The primary structure comprises 508 residues: uncharacterized protein (508 aa).

A Resolvase/invertase-type recombinase catalytic domain is found at 3–163 (KAIAYMRFSS…LSWKKKRQDA (161 aa)). Catalysis depends on serine 11, which acts as the O-(5'-phospho-DNA)-serine intermediate. A DNA-binding region (recombinase) is located at residues 175 to 290 (PRWLSLDDKR…QEIRLAPFGI (116 aa)).

This is an uncharacterized protein from Escherichia coli (strain K12).